The following is a 314-amino-acid chain: WD repeat domain-containing protein 83 (314 aa).

WD repeat units follow at residues 23–62, 65–104, 107–146, 151–188, 189–228, 231–272, and 275–313; these read CNQG…LLKT, GHGY…VVRK, GHAG…PDAI, EAKD…MCAD, YLGS…LLGE, GHQN…LVLK, and VGKA…EEGG.

This sequence belongs to the WD repeat MORG1 family.

Its subcellular location is the cytoplasm. Molecular scaffold protein for various multimeric protein complexes. Acts as a module in the assembly of a multicomponent scaffold for the ERK pathway, linking ERK responses to specific agonists. Also involved in response to hypoxia by acting as a negative regulator of HIF1A/HIF-1-alpha. This chain is WD repeat domain-containing protein 83 (wdr83), found in Xenopus laevis (African clawed frog).